The following is a 321-amino-acid chain: Calcium-regulated beta-propeller protein CarP (321 aa).

Residues 1 to 42 (MTIHAQTPEPFSMSRAFTPRRLLLAVLLVALSALVLLGQSFR) form the signal peptide.

This sequence belongs to the YjiK family.

It is found in the cell inner membrane. In terms of biological role, plays a role in intracellular Ca(2+) homeostasis. Involved in modulating Ca(2+)-induced swarming motility and pyocyanine production. Plays a role in regulating virulence in a Ca(2+)-dependent manner. Involved in cell protection against oxidative stress in the presence of elevated Ca(2+). The chain is Calcium-regulated beta-propeller protein CarP from Pseudomonas aeruginosa (strain ATCC 15692 / DSM 22644 / CIP 104116 / JCM 14847 / LMG 12228 / 1C / PRS 101 / PAO1).